The primary structure comprises 284 residues: ELMO domain-containing protein B (284 aa).

Positions 124-276 (EHEASLERLW…EFETKISQNS (153 aa)) constitute an ELMO domain.

The chain is ELMO domain-containing protein B (elmoB) from Dictyostelium discoideum (Social amoeba).